We begin with the raw amino-acid sequence, 139 residues long: General odorant-binding protein 56a (139 aa).

Residues 1–19 form the signal peptide; sequence MNSYFVIALSALFVTLAVG. Asparagine 23 is a glycosylation site (N-linked (GlcNAc...) asparagine). 3 cysteine pairs are disulfide-bonded: cysteine 39–cysteine 71, cysteine 67–cysteine 118, and cysteine 109–cysteine 127.

Belongs to the PBP/GOBP family. In terms of tissue distribution, expressed in ventral pits of larvae. In adults, it is not specifically expressed in chemosensory organs. Also expressed in stalk cells at the proximal tip of the wing disk.

It is found in the secreted. Present in the aqueous fluid surrounding olfactory sensory dendrites and are thought to aid in the capture and transport of hydrophobic odorants into and through this fluid. In Drosophila melanogaster (Fruit fly), this protein is General odorant-binding protein 56a (Obp56a).